We begin with the raw amino-acid sequence, 845 residues long: ABC transporter A family member 9 (845 aa).

7 consecutive transmembrane segments (helical) span residues 33–53 (CVQI…NFWV), 192–212 (AFVA…FLGG), 235–255 (IASL…MPLF), 292–312 (IYFI…FAVF), 318–338 (FAMF…SFFL), 347–367 (AASI…SILS), and 417–437 (SKII…ALYL). In terms of domain architecture, ABC transporter spans 531–762 (VIIEGLTKHY…FGDGYSVRIN (232 aa)). Residue 565-572 (GANGAGKT) coordinates ATP.

This sequence belongs to the ABC transporter superfamily. ABCA family.

It localises to the membrane. The chain is ABC transporter A family member 9 (abcA9) from Dictyostelium discoideum (Social amoeba).